Here is a 339-residue protein sequence, read N- to C-terminus: Protein RecA (339 aa).

An ATP-binding site is contributed by 66-73 (GPESSGKT).

The protein belongs to the RecA family.

The protein resides in the cytoplasm. Can catalyze the hydrolysis of ATP in the presence of single-stranded DNA, the ATP-dependent uptake of single-stranded DNA by duplex DNA, and the ATP-dependent hybridization of homologous single-stranded DNAs. It interacts with LexA causing its activation and leading to its autocatalytic cleavage. This Geobacter metallireducens (strain ATCC 53774 / DSM 7210 / GS-15) protein is Protein RecA.